Consider the following 373-residue polypeptide: tRNA-specific 2-thiouridylase MnmA (373 aa).

ATP contacts are provided by residues 12-19 (GMSGGVDS) and Met38. The segment at 98–100 (NPD) is interaction with target base in tRNA. Cys103 functions as the Nucleophile in the catalytic mechanism. Cys103 and Cys200 are joined by a disulfide. Gly127 is a binding site for ATP. An interaction with tRNA region spans residues 150-152 (KDQ). The active-site Cysteine persulfide intermediate is the Cys200. The interval 312 to 313 (RY) is interaction with tRNA.

It belongs to the MnmA/TRMU family.

The protein resides in the cytoplasm. It carries out the reaction S-sulfanyl-L-cysteinyl-[protein] + uridine(34) in tRNA + AH2 + ATP = 2-thiouridine(34) in tRNA + L-cysteinyl-[protein] + A + AMP + diphosphate + H(+). Catalyzes the 2-thiolation of uridine at the wobble position (U34) of tRNA, leading to the formation of s(2)U34. In Streptococcus pneumoniae (strain 70585), this protein is tRNA-specific 2-thiouridylase MnmA.